A 705-amino-acid polypeptide reads, in one-letter code: p-hydroxybenzoic acid--AMP ligase FadD22 (705 aa).

One can recognise a Carrier domain in the interval 541–619 (ERQRLVVDAV…GLAQYLEAEL (79 aa)). Ser579 carries the O-(pantetheine 4'-phosphoryl)serine modification.

This sequence belongs to the ATP-dependent AMP-binding enzyme family.

The enzyme catalyses holo-[4-hydroxyphenylalkanoate synthase] + 4-hydroxybenzoate + ATP = 4-hydroxyphenyl-[4-hydroxyphenylalkanoate synthase] + AMP + diphosphate. It functions in the pathway lipid metabolism; fatty acid biosynthesis. Catalyzes the adenylation of p-hydroxybenzoic acid (pHBA) to form p-hydroxybenzoic acid-AMP (pHBA-AMP), which is converted directly to p-hydroxybenzoyl-S-FadD22 (pHBA-S-FAdD22) thioester intermediate in a CoA-independent manner by attack of the phosphopantetheine thiol of FadD22. Usually, this intermediate primes the biosynthesis of the phenolphthiocerol (PPOL) by presenting the pHBA starter unit for elongation by Pks15/1, but M.tuberculosis lacks Pks15/1 due to a natural frameshift and thus is unable to produce PPOL. This is p-hydroxybenzoic acid--AMP ligase FadD22 (fadD22) from Mycobacterium tuberculosis (strain CDC 1551 / Oshkosh).